The sequence spans 1074 residues: Telomerase reverse transcriptase (1074 aa).

A disordered region spans residues 240 to 265; that stretch reads DKVSCETMQDGESGKTTLVQKQPGSK. Over residues 253 to 262 the composition is skewed to polar residues; the sequence is GKTTLVQKQP. Positions 300-305 match the TFLY; involved in RNA binding motif; it reads TLGFLY. Interaction with RNA template stretches follow at residues 355-360 and 461-486; these read LPRRFF and WKIK…ELSY. The 326-residue stretch at 552–877 folds into the Reverse transcriptase domain; it reads TPDQVAALPK…CLFPWCGLLL (326 aa). The Mg(2+) site is built by D649, D810, and D811.

Belongs to the reverse transcriptase family. Telomerase subfamily. Catalytic subunit of the telomerase holoenzyme complex composed minimally of TERT and the telomerase RNA template component (TERC). In terms of tissue distribution, detected at highest levels in gill, ovary and testis, and at lower levels in brain, eye, heart, skin, spleen and stomach.

Its subcellular location is the nucleus. It localises to the chromosome. It is found in the telomere. It carries out the reaction DNA(n) + a 2'-deoxyribonucleoside 5'-triphosphate = DNA(n+1) + diphosphate. In terms of biological role, telomerase is a ribonucleoprotein enzyme essential for the replication of chromosome termini in most eukaryotes. It elongates telomeres. It is a reverse transcriptase that adds simple sequence repeats to chromosome ends by copying a template sequence within the RNA component of the enzyme. The chain is Telomerase reverse transcriptase from Takifugu rubripes (Japanese pufferfish).